Here is a 600-residue protein sequence, read N- to C-terminus: NAD-dependent malic enzyme, mitochondrial (600 aa).

Residues Met1 to Thr68 constitute a mitochondrion transit peptide. Position 93 (Arg93) interacts with fumarate. The active-site Proton donor is Tyr138. Arg194 lines the (S)-malate pocket. An NAD(+)-binding site is contributed by Arg194. Lys212 functions as the Proton acceptor in the catalytic mechanism. A divalent metal cation-binding residues include Glu283, Asp284, and Asp307. NAD(+) is bound by residues Gly344 and Ala347. Asn458 and Asn502 together coordinate (S)-malate.

It belongs to the malic enzymes family. Mg(2+) is required as a cofactor. Mn(2+) serves as cofactor.

It localises to the mitochondrion matrix. The protein resides in the cytoplasm. The protein localises to the cytosol. Its subcellular location is the nucleus. It catalyses the reaction (S)-malate + NAD(+) = pyruvate + CO2 + NADH. The catalysed reaction is oxaloacetate + H(+) = pyruvate + CO2. Functionally, NAD-dependent mitochondrial malic enzyme that catalyzes the oxidative decarboxylation of malate to pyruvate. The polypeptide is NAD-dependent malic enzyme, mitochondrial (Cryptococcus neoformans var. grubii serotype A (strain H99 / ATCC 208821 / CBS 10515 / FGSC 9487) (Filobasidiella neoformans var. grubii)).